The chain runs to 316 residues: D-alanine--D-alanine ligase (316 aa).

An ATP-grasp domain is found at lysine 104–alanine 303. Residue proline 130–threonine 185 participates in ATP binding. Mg(2+)-binding residues include aspartate 257, glutamate 270, and asparagine 272.

It belongs to the D-alanine--D-alanine ligase family. Requires Mg(2+) as cofactor. The cofactor is Mn(2+).

The protein resides in the cytoplasm. The enzyme catalyses 2 D-alanine + ATP = D-alanyl-D-alanine + ADP + phosphate + H(+). It functions in the pathway cell wall biogenesis; peptidoglycan biosynthesis. In terms of biological role, cell wall formation. The polypeptide is D-alanine--D-alanine ligase (Bordetella parapertussis (strain 12822 / ATCC BAA-587 / NCTC 13253)).